Consider the following 956-residue polypeptide: Replication factor C subunit 1 (956 aa).

Composition is skewed to basic and acidic residues over residues 1 to 15 (MSDIRKWFMKAHEKG) and 50 to 74 (TADRRKTSKYFGKDKTKVKDEKEVE). Disordered regions lie at residues 1–206 (MSDI…TPDC) and 286–332 (KKSL…AKGK). Positions 158-183 (RGRGGRAAPGASTGGRGRGGGRGGFM) are enriched in gly residues. 2 stretches are compositionally biased toward basic and acidic residues: residues 186–200 (GERKDPPHKGEKEVP) and 288–298 (SLPERSNKGTE). A BRCT domain is found at 202-292 (GTPDCLAGLT…KPVKKSLPER (91 aa)). 399–406 (SGTPGIGK) serves as a coordination point for ATP. Residues 858–956 (LEPTVDSLRD…GRGSGAKRKR (99 aa)) form a disordered region. Residues 866 to 892 (RDEDGEPLADNEEGNGSDAEEDSEEAT) show a composition bias toward acidic residues. Over residues 916–925 (KGAGSSGSRK) the composition is skewed to low complexity.

The protein belongs to the activator 1 large subunit family. In terms of assembly, heterotetramer of subunits RFC2, RFC3, RFC4 and RFC5 that can form a complex with RFC1. As to expression, expressed at high levels in flowers and siliques, and at lower levels in roots, stems and leaves.

It is found in the nucleus. Plays a role as mediator of transcriptional gene silencing (TGS), DNA replication, DNA repair, hypersensitive response (HR) and telomere length regulation. Is required in meiosis for DNA double-strand break (DSB) repair during meiotic homologous recombination. May participate in the RAD51-mediated recombination intermediate repair process. Is important for lagging strand synthesis. Promotes meiotic recombination via a specific pathway for crossovers (COs) that involves the formation of double Holliday Junction (dHJ) intermediates. This chain is Replication factor C subunit 1 (RFC1), found in Arabidopsis thaliana (Mouse-ear cress).